Reading from the N-terminus, the 394-residue chain is Elongation factor Tu, mitochondrial (394 aa).

Residues 10 to 204 (KPHCNIGTIG…AVDNYIPQPE (195 aa)) enclose the tr-type G domain. The interval 19-26 (GHVDHGKT) is G1. 19 to 26 (GHVDHGKT) lines the GTP pocket. Residues 60–64 (GITIS) are G2. The G3 stretch occupies residues 81 to 84 (DCPG). GTP-binding positions include 81–85 (DCPGH) and 136–139 (NKVD). The segment at 136-139 (NKVD) is G4. Residues 174–176 (SAL) form a G5 region.

This sequence belongs to the TRAFAC class translation factor GTPase superfamily. Classic translation factor GTPase family. EF-Tu/EF-1A subfamily.

The protein localises to the mitochondrion. Its function is as follows. This protein promotes the GTP-dependent binding of aminoacyl-tRNA to the A-site of ribosomes during protein biosynthesis. The chain is Elongation factor Tu, mitochondrial (TUFA) from Reclinomonas americana.